The following is a 122-amino-acid chain: MSTLSRKQQTQKRHRRLRRHLSGTADRPRLAVFRSNSHIYAQVIDDAAQSTLCSASTLDKDLRTSLTATGSTCDASVAVGELVAKRALAKGIQQVVFDRGGNLYHGRVKALADAAREAGLQF.

A disordered region spans residues 1-24 (MSTLSRKQQTQKRHRRLRRHLSGT). The segment covering 9-21 (QTQKRHRRLRRHL) has biased composition (basic residues).

The protein belongs to the universal ribosomal protein uL18 family. In terms of assembly, part of the 50S ribosomal subunit; part of the 5S rRNA/L5/L18/L25 subcomplex. Contacts the 5S and 23S rRNAs.

Its function is as follows. This is one of the proteins that bind and probably mediate the attachment of the 5S RNA into the large ribosomal subunit, where it forms part of the central protuberance. The sequence is that of Large ribosomal subunit protein uL18 from Synechococcus sp. (strain WH7803).